A 560-amino-acid chain; its full sequence is Membrane protein insertase YidC (560 aa).

A helical membrane pass occupies residues 1–21 (MDIKRTILIAALAVVSYVMVL). Residues 42–66 (VAPGLPDGVPAGNNGASADVPSANA) form a disordered region. 5 helical membrane passes run 341–361 (LELT…FWLL), 367–387 (LLGN…GLFF), 437–457 (LGGC…YWVL), 468–488 (WMLW…PIIM), and 515–535 (PIIF…YWVV).

The protein belongs to the OXA1/ALB3/YidC family. Type 1 subfamily. As to quaternary structure, interacts with the Sec translocase complex via SecD. Specifically interacts with transmembrane segments of nascent integral membrane proteins during membrane integration.

The protein resides in the cell inner membrane. Its function is as follows. Required for the insertion and/or proper folding and/or complex formation of integral membrane proteins into the membrane. Involved in integration of membrane proteins that insert both dependently and independently of the Sec translocase complex, as well as at least some lipoproteins. Aids folding of multispanning membrane proteins. In Pseudomonas putida (strain GB-1), this protein is Membrane protein insertase YidC.